We begin with the raw amino-acid sequence, 86 residues long: Exodeoxyribonuclease 7 small subunit (86 aa).

The protein belongs to the XseB family. As to quaternary structure, heterooligomer composed of large and small subunits.

The protein resides in the cytoplasm. The catalysed reaction is Exonucleolytic cleavage in either 5'- to 3'- or 3'- to 5'-direction to yield nucleoside 5'-phosphates.. Functionally, bidirectionally degrades single-stranded DNA into large acid-insoluble oligonucleotides, which are then degraded further into small acid-soluble oligonucleotides. The protein is Exodeoxyribonuclease 7 small subunit of Agrobacterium fabrum (strain C58 / ATCC 33970) (Agrobacterium tumefaciens (strain C58)).